The primary structure comprises 362 residues: Solute carrier family 25 member 3 (362 aa).

Residues 1 to 49 (MYSSVVHLARANPFNAPHLQLVHDGLAGPRSDPAGPPGPPRRSRNLAAA) constitute a mitochondrion transit peptide. The Mitochondrial intermembrane segment spans residues 50 to 63 (AVEEQYSCDYGSGR). 3 Solcar repeats span residues 63 to 147 (RFFI…FKVL), 160 to 244 (WRTS…TVEA), and 261 to 339 (EQLV…VKVY). The helical transmembrane segment at 64–86 (FFILCGLGGIISCGTTHTALVPL) threads the bilayer. Over 87-121 (DLVKCRMQVDPQKYKSIFNGFSVTLKEDGFRGLAK) the chain is Mitochondrial matrix. At K99 the chain carries N6-acetyllysine. K112 bears the N6-methyllysine mark. Residues 122–141 (GWAPTFIGYSLQGLCKFGFY) traverse the membrane as a helical segment. The Mitochondrial intermembrane segment spans residues 142 to 161 (EVFKVLYSNMLGEENAYLWR). Residues 162–183 (TSLYLAASASAEFFADIALAPM) form a helical membrane-spanning segment. Topologically, residues 184-218 (EAAKVRIQTQPGYANTLRDAAPKMYKEEGLKAFYK) are mitochondrial matrix. Residue Y196 is modified to Phosphotyrosine. K209 is modified (N6-acetyllysine). Residues 219–238 (GVAPLWMRQIPYTMMKFACF) form a helical membrane-spanning segment. The Mitochondrial intermembrane portion of the chain corresponds to 239 to 261 (ERTVEALYKFVVPKPRSECSKPE). A helical membrane pass occupies residues 262 to 284 (QLVVTFVAGYIAGVFCAIVSHPA). The Mitochondrial matrix portion of the chain corresponds to 285-314 (DSVVSVLNKEKGSSASEVLKRLGFRGVWKG). Residues 315 to 333 (LFARIIMIGTLTALQWFIY) traverse the membrane as a helical segment. Residues 334-362 (DSVKVYFRLPRPPPPEMPESLKKKLGYTQ) lie on the Mitochondrial intermembrane side of the membrane.

Belongs to the mitochondrial carrier (TC 2.A.29) family. Interacts with PPIF; the interaction is impaired by CsA. Expressed in heart, diaphragm and skeletal muscle (at protein level). Not detected in liver, lung, brain, and kidney (at protein level). In terms of tissue distribution, ubiquitous (at protein level).

It localises to the mitochondrion inner membrane. It catalyses the reaction phosphate(in) + H(+)(in) = phosphate(out) + H(+)(out). Up-regulated in the presence of cardiolipin. Inorganic ion transporter that transports phosphate or copper ions across the mitochondrial inner membrane into the matrix compartment. Mediates proton-coupled symport of phosphate ions necessary for mitochondrial oxidative phosphorylation of ADP to ATP. Transports copper ions probably in the form of anionic copper(I) complexes to maintain mitochondrial matrix copper pool and to supply copper for cytochrome C oxidase complex assembly. May also play a role in regulation of the mitochondrial permeability transition pore (mPTP). The chain is Solute carrier family 25 member 3 from Bos taurus (Bovine).